The following is an 89-amino-acid chain: Teretoxin Tan6.8 (89 aa).

The N-terminal stretch at 1-21 (MRLLLILLLLTPVILAGSLDE) is a signal peptide. The segment at 22-42 (EPNNADGANAASFTADQEGRH) is disordered. A propeptide spanning residues 22–44 (EPNNADGANAASFTADQEGRHKR) is cleaved from the precursor.

Post-translationally, contains 3 disulfide bonds. Expressed by the venom duct.

Its subcellular location is the secreted. The chain is Teretoxin Tan6.8 from Terebra anilis (Auger snail).